Reading from the N-terminus, the 157-residue chain is Large ribosomal subunit protein mL59 (157 aa).

The protein belongs to the mitochondrion-specific ribosomal protein mL59 family. As to quaternary structure, component of the mitochondrial large ribosomal subunit (mt-LSU). Mature yeast 74S mitochondrial ribosomes consist of a small (37S) and a large (54S) subunit. The 37S small subunit contains a 15S ribosomal RNA (15S mt-rRNA) and 34 different proteins. The 54S large subunit contains a 21S rRNA (21S mt-rRNA) and 46 different proteins.

It localises to the mitochondrion. Its function is as follows. Component of the mitochondrial ribosome (mitoribosome), a dedicated translation machinery responsible for the synthesis of mitochondrial genome-encoded proteins, including at least some of the essential transmembrane subunits of the mitochondrial respiratory chain. The mitoribosomes are attached to the mitochondrial inner membrane and translation products are cotranslationally integrated into the membrane. This chain is Large ribosomal subunit protein mL59 (MRPL25), found in Saccharomyces cerevisiae (strain ATCC 204508 / S288c) (Baker's yeast).